A 497-amino-acid chain; its full sequence is Glucose-6-phosphate 1-dehydrogenase (497 aa).

NADP(+) contacts are provided by residues 15–22 (GASGDLSK), Arg-49, and Lys-153. D-glucose 6-phosphate contacts are provided by residues Lys-153, 183 to 187 (HYLGK), Glu-221, and Asp-240. His-245 (proton acceptor) is an active-site residue. Arg-336 provides a ligand contact to NADP(+). Position 339 (Lys-339) interacts with D-glucose 6-phosphate. The NADP(+) site is built by Lys-345, Arg-349, and Arg-371. Gln-373 lines the D-glucose 6-phosphate pocket. NADP(+)-binding positions include 379 to 381 (YLK), 399 to 401 (DLT), and Arg-466.

The protein belongs to the glucose-6-phosphate dehydrogenase family.

The enzyme catalyses D-glucose 6-phosphate + NADP(+) = 6-phospho-D-glucono-1,5-lactone + NADPH + H(+). It functions in the pathway carbohydrate degradation; pentose phosphate pathway; D-ribulose 5-phosphate from D-glucose 6-phosphate (oxidative stage): step 1/3. In terms of biological role, catalyzes the rate-limiting step of the oxidative pentose-phosphate pathway, which represents a route for the dissimilation of carbohydrates besides glycolysis. The main function of this enzyme is to provide reducing power (NADPH) and pentose phosphates for fatty acid and nucleic acid synthesis. This chain is Glucose-6-phosphate 1-dehydrogenase (ZWF), found in Kluyveromyces lactis (strain ATCC 8585 / CBS 2359 / DSM 70799 / NBRC 1267 / NRRL Y-1140 / WM37) (Yeast).